A 472-amino-acid chain; its full sequence is MATKCGNCGPGYSTPLEAMKGPREEIVYLPCIYRNTGTEAPDYLATVDVDPKSPQYCQVIHRLPMPNLKDELHHSGWNTCSSCFGDSTKSRTKLVLPSLISSRIYVVDVGSEPRAPKLHKVIEPKDIHAKCELAFLHTSHCLASGEVMISSLGDVKGNGKGGFVLLDGETFEVKGTWERPGGAAPLGYDFWYQPRHNVMISTEWAAPNVLRDGFNPADVEAGLYGSHLYVWDWQRHEIVQTLSLKDGLIPLEIRFLHNPDAAQGFVGCALSSTIQRFYKNEGGTWSVEKVIQVPPKKVKGWLLPEMPGLITDILLSLDDRFLYFSNWLHGDLRQYDISDPQRPRLTGQLFLGGSIVKGGPVQVLEDEELKSQPEPLVVKGKRVAGGPQMIQLSLDGKRLYITTSLYSAWDKQFYPDLIREGSVMLQVDVDTVKGGLKLNPNFLVDFGKEPLGPALAHELRYPGGDCSSDIWI.

The residue at position 2 (Ala-2) is an N-acetylalanine. Phosphoserine is present on residues Ser-111, Ser-371, and Ser-467.

This sequence belongs to the selenium-binding protein family. Interacts with USP33. Post-translationally, phosphorylated. In terms of processing, the N-terminus is blocked. As to expression, widely expressed. Highly expressed in liver, lung, colon, prostate, kidney and pancreas. In brain, present both in neurons and glia (at protein level). Down-regulated in lung adenocarcinoma, colorectal carcinoma and ovarian cancer. Two-fold up-regulated in brain and blood from schizophrenia patients.

The protein localises to the nucleus. It localises to the cytoplasm. It is found in the cytosol. Its subcellular location is the membrane. The catalysed reaction is methanethiol + O2 + H2O = hydrogen sulfide + formaldehyde + H2O2 + H(+). Its pathway is organosulfur degradation. Catalyzes the oxidation of methanethiol, an organosulfur compound known to be produced in substantial amounts by gut bacteria. Selenium-binding protein which may be involved in the sensing of reactive xenobiotics in the cytoplasm. May be involved in intra-Golgi protein transport. This is Methanethiol oxidase (SELENBP1) from Homo sapiens (Human).